The chain runs to 283 residues: Thymidylate synthase (283 aa).

Arginine 22 contributes to the dUMP binding site. The active-site Nucleophile is the cysteine 160. DUMP-binding positions include 180 to 183, asparagine 191, and 221 to 223; these read RSCD and HIY. Aspartate 183 contributes to the (6R)-5,10-methylene-5,6,7,8-tetrahydrofolate binding site. Alanine 282 contributes to the (6R)-5,10-methylene-5,6,7,8-tetrahydrofolate binding site.

This sequence belongs to the thymidylate synthase family. Bacterial-type ThyA subfamily. In terms of assembly, homodimer.

Its subcellular location is the cytoplasm. It catalyses the reaction dUMP + (6R)-5,10-methylene-5,6,7,8-tetrahydrofolate = 7,8-dihydrofolate + dTMP. It participates in pyrimidine metabolism; dTTP biosynthesis. Its function is as follows. Catalyzes the reductive methylation of 2'-deoxyuridine-5'-monophosphate (dUMP) to 2'-deoxythymidine-5'-monophosphate (dTMP) while utilizing 5,10-methylenetetrahydrofolate (mTHF) as the methyl donor and reductant in the reaction, yielding dihydrofolate (DHF) as a by-product. This enzymatic reaction provides an intracellular de novo source of dTMP, an essential precursor for DNA biosynthesis. In Idiomarina loihiensis (strain ATCC BAA-735 / DSM 15497 / L2-TR), this protein is Thymidylate synthase.